Consider the following 394-residue polypeptide: uncharacterized protein (394 aa).

Transmembrane regions (helical) follow at residues 31 to 51 and 57 to 77; these read LAIL…LSGL and LIIA…SLLI.

This sequence belongs to the chlamydial CPn_0129/CT_036/TC_0306 family.

It localises to the cell membrane. This is an uncharacterized protein from Chlamydia pneumoniae (Chlamydophila pneumoniae).